A 118-amino-acid polypeptide reads, in one-letter code: Large ribosomal subunit protein uL22c (118 aa).

It belongs to the universal ribosomal protein uL22 family. In terms of assembly, part of the 50S ribosomal subunit.

It localises to the plastid. Its subcellular location is the chloroplast. Its function is as follows. This protein binds specifically to 23S rRNA. In terms of biological role, the globular domain of the protein is located near the polypeptide exit tunnel on the outside of the subunit, while an extended beta-hairpin is found that lines the wall of the exit tunnel in the center of the 70S ribosome. This Rhodomonas salina (Cryptomonas salina) protein is Large ribosomal subunit protein uL22c (rpl22).